We begin with the raw amino-acid sequence, 71 residues long: Cell division protein FtsB (71 aa).

Residues 1–3 (MKI) lie on the Cytoplasmic side of the membrane. Residues 4–21 (LKIFLLSLLFWLQYSLWF) form a helical membrane-spanning segment. The Extracellular segment spans residues 22-71 (GKNGVLDFIKIYRRVTIEKKNNEYLDMRNNQIILEIENFNNHINKDKKKT).

Belongs to the FtsB family.

Its subcellular location is the cell membrane. Functionally, essential cell division protein. May link together the upstream cell division proteins, which are predominantly cytoplasmic, with the downstream cell division proteins, which are predominantly extracellular. In Buchnera aphidicola subsp. Acyrthosiphon pisum (strain APS) (Acyrthosiphon pisum symbiotic bacterium), this protein is Cell division protein FtsB.